The chain runs to 169 residues: Phosphopantetheine adenylyltransferase (169 aa).

Ser-8 contributes to the substrate binding site. ATP is bound by residues 8-9 (SF) and His-16. Positions 40, 72, and 86 each coordinate substrate. ATP-binding positions include 87–89 (GLR), Glu-97, and 122–128 (YSFLSSS).

It belongs to the bacterial CoaD family. In terms of assembly, homohexamer. It depends on Mg(2+) as a cofactor.

The protein resides in the cytoplasm. The catalysed reaction is (R)-4'-phosphopantetheine + ATP + H(+) = 3'-dephospho-CoA + diphosphate. It participates in cofactor biosynthesis; coenzyme A biosynthesis; CoA from (R)-pantothenate: step 4/5. Reversibly transfers an adenylyl group from ATP to 4'-phosphopantetheine, yielding dephospho-CoA (dPCoA) and pyrophosphate. The sequence is that of Phosphopantetheine adenylyltransferase from Cyanothece sp. (strain PCC 7425 / ATCC 29141).